Reading from the N-terminus, the 60-residue chain is Large ribosomal subunit protein bL32 (60 aa).

Residues 1–22 (MAVPARHTSKAKKNKRRTHYKL) are disordered. Residues 7-20 (HTSKAKKNKRRTHY) are compositionally biased toward basic residues.

The protein belongs to the bacterial ribosomal protein bL32 family.

The sequence is that of Large ribosomal subunit protein bL32 from Streptococcus pyogenes serotype M3 (strain ATCC BAA-595 / MGAS315).